The chain runs to 557 residues: Glucose-6-phosphate isomerase (557 aa).

An N-acetylalanine modification is found at Ala-2. Lys-12 is subject to N6-acetyllysine. Residue Ser-107 is modified to Phosphoserine. Residue Lys-142 is modified to N6-acetyllysine. Gly-159–Ser-160 contributes to the D-glucose 6-phosphate binding site. The residue at position 185 (Ser-185) is a Phosphoserine; by CK2. Position 210-215 (Ser-210–Thr-215) interacts with D-glucose 6-phosphate. Thr-250 is modified (phosphothreonine). Gln-354, Glu-358, and His-389 together coordinate D-glucose 6-phosphate. Glu-358 (proton donor) is an active-site residue. His-389 is a catalytic residue. Ser-455 carries the phosphoserine modification. Residue Lys-519 participates in D-glucose 6-phosphate binding. The active site involves Lys-519.

It belongs to the GPI family. As to quaternary structure, homodimer; in the catalytically active form. Monomer in the secreted form. Phosphorylation at Ser-185 by CK2 has been shown to decrease enzymatic activity and may contribute to secretion by a non-classical secretory pathway. Post-translationally, ISGylated.

Its subcellular location is the cytoplasm. It is found in the secreted. It catalyses the reaction alpha-D-glucose 6-phosphate = beta-D-fructose 6-phosphate. It functions in the pathway carbohydrate degradation; glycolysis; D-glyceraldehyde 3-phosphate and glycerone phosphate from D-glucose: step 2/4. In the cytoplasm, catalyzes the conversion of glucose-6-phosphate to fructose-6-phosphate, the second step in glycolysis, and the reverse reaction during gluconeogenesis. Besides it's role as a glycolytic enzyme, also acts as a secreted cytokine: acts as an angiogenic factor (AMF) that stimulates endothelial cell motility. Acts as a neurotrophic factor, neuroleukin, for spinal and sensory neurons. It is secreted by lectin-stimulated T-cells and induces immunoglobulin secretion. The sequence is that of Glucose-6-phosphate isomerase from Bos taurus (Bovine).